The sequence spans 510 residues: Glycosyl hydrolase YngK (510 aa).

Positions 1 to 30 (MKVCQKSIVRFLVSLIIGTFVISVPFMANA) are cleaved as a signal peptide.

It belongs to the glycosyl hydrolase-like 10 (GHL10) family.

This chain is Glycosyl hydrolase YngK (yngK), found in Bacillus subtilis (strain 168).